A 226-amino-acid chain; its full sequence is MIKMQVWKKLFAKSPFKPLIRHAEVVVQTVETLEKALDSWARGDYENMKEYAKKVDDLEDIADKIKSELRDSITSKLLMPVQRTDILEYLHMQDKIADAAEDTAKWLLIKRNLDSIPNDIKDIILKMGKESIKAAKLVYEAIKQLDNVLESGFAEKEIKKEYKIIKQIEEVESKIDGLDSKLMEIVFTSELDWKDGLYILNIARTLSNISDKAKDTAERIRVLMNK.

This sequence belongs to the UPF0111 family.

This is UPF0111 protein PH0637 from Pyrococcus horikoshii (strain ATCC 700860 / DSM 12428 / JCM 9974 / NBRC 100139 / OT-3).